The sequence spans 717 residues: Cleavage stimulation factor subunit 3 (717 aa).

Ser-2 carries the N-acetylserine modification. HAT repeat units follow at residues 45–77 (QPID…AEIK), 79–110 (KNYD…YVRE), 117–152 (SYKE…FLKG), 163–196 (QRIT…YEEG), 221–261 (KEYE…WEKS), 271–303 (LITK…YLEQ), 319–352 (LFSD…YEES), 354–387 (MKYE…FARR), and 458–494 (NEDN…FESN). Residues 684–705 (VKRPNEDSDEDEEKGAVVPPVH) form a disordered region. A Phosphoserine modification is found at Ser-691.

As to quaternary structure, homodimer. The CSTF complex is composed of CSTF1 (50 kDa subunit), CSTF2 (64 kDa subunit) and CSTF3 (77 kDa subunit). CSTF3 directly interacts with CSTF1 and CSTF2. Interacts with FIP1L1.

The protein resides in the nucleus. Its function is as follows. One of the multiple factors required for polyadenylation and 3'-end cleavage of mammalian pre-mRNAs. This is Cleavage stimulation factor subunit 3 (CSTF3) from Pongo abelii (Sumatran orangutan).